A 170-amino-acid chain; its full sequence is Mediator of RNA polymerase II transcription subunit 10 (170 aa).

This sequence belongs to the Mediator complex subunit 10 family. As to quaternary structure, component of the Mediator complex.

The protein localises to the nucleus. Its function is as follows. Component of the Mediator complex, a coactivator involved in the regulated transcription of nearly all RNA polymerase II-dependent genes. Mediator functions as a bridge to convey information from gene-specific regulatory proteins to the basal RNA polymerase II transcription machinery. Mediator is recruited to promoters by direct interactions with regulatory proteins and serves as a scaffold for the assembly of a functional preinitiation complex with RNA polymerase II and the general transcription factors. This is Mediator of RNA polymerase II transcription subunit 10 (NUT2) from Candida albicans (strain SC5314 / ATCC MYA-2876) (Yeast).